The chain runs to 389 residues: Radial spoke head protein 3 homolog B (389 aa).

The interval 63-106 (PTGQVPGQPDPLELQRQQQARRRALARKRAQEQLKPRTPEPVEG) is disordered. Residues 81-90 (QARRRALARK) show a composition bias toward basic residues. A compositionally biased stretch (basic and acidic residues) spans 91-106 (RAQEQLKPRTPEPVEG). The residue at position 143 (threonine 143) is a Phosphothreonine; by MAPK1. The stretch at 206–242 (YEEIRNVELAEVQRLEEQERRHREEKERRKKQQWEIV) forms a coiled coil. The segment at 332 to 389 (EAMPPGQKTNVINGPNTVTDPSVTTLHTQKPVLDRVSSQPAPSQERKPVEEGGHLMAE) is disordered. Residues 338–359 (QKTNVINGPNTVTDPSVTTLHT) are compositionally biased toward polar residues. Residues 375–389 (QERKPVEEGGHLMAE) are compositionally biased toward basic and acidic residues.

It belongs to the flagellar radial spoke RSP3 family. As to quaternary structure, component of the axonemal radial spoke 1 (RS1) and 2 (RS2) complexes, at least composed of spoke head proteins RSPH1, RSPH3B, RSPH9 and the cilia-specific component RSPH4A or sperm-specific component RSPH6A, spoke stalk proteins RSPH14, DNAJB13, DYDC1, ROPN1L and NME5, and the RS1 complex-specific anchor protein IQUB. Interacts with IQUB. Interacts with phosphorylated MAPK1. Interacts with MEK1. Interacts with PKA regulatory subunits PRKAR1A and PRKAR1B. Interacts with RSPH1. Interacts with RSPH4A. Interacts with RSPH6A. Interacts with RSPH9. Interacts with LRRC23. Expressed in ependymal cells (at protein level).

It localises to the cytoplasm. The protein resides in the cytoskeleton. It is found in the cilium axoneme. Its subcellular location is the flagellum axoneme. Functionally, functions as part of axonemal radial spoke complexes that play an important part in the motility of sperm and cilia. Functions as a protein kinase A-anchoring protein that scaffolds the cAMP-dependent protein kinase holoenzyme. May serve as a point of convergence for MAPK and PKA signaling in cilia. This Mus musculus (Mouse) protein is Radial spoke head protein 3 homolog B (Rsph3b).